A 139-amino-acid chain; its full sequence is MIIFQDLISHNEMFSDIYKIWEITNGLCLEVEQKMLSKTTGNTDDSLIGRNSSSESTEDEVTESTIITSVDIVTNHHLQESIFTKEAYKKYIKDYMKSINEKLEEQRPERVKLFITGMKNKSSTSLLIFKTTSSLLVKT.

The TCTP domain occupies 1-139; that stretch reads MIIFQDLISH…KTTSSLLVKT (139 aa). The span at 40 to 51 shows a compositional bias: polar residues; it reads TGNTDDSLIGRN. Residues 40–60 are disordered; the sequence is TGNTDDSLIGRNSSSESTEDE.

It belongs to the TCTP family.

The chain is Putative translationally-controlled tumor protein-like protein TPT1P8 (TPT1P8) from Homo sapiens (Human).